Reading from the N-terminus, the 377-residue chain is Ferric enterobactin transport protein FepE (377 aa).

The Cytoplasmic segment spans residues 1–41 (MSSLNIKQGSDAHFPDYPLASPSNNEIDLLNLISVLWRAKK). The helical transmembrane segment at 42 to 62 (TVMAVVFAFACAGLLISFILP) threads the bilayer. At 63-338 (QKWTSAAVVT…LPVKKDGPGK (276 aa)) the chain is on the periplasmic side. The chain crosses the membrane as a helical span at residues 339–359 (AIIVILSALIGGMVACGGVLL). The Cytoplasmic portion of the chain corresponds to 360 to 377 (RYAMASRKQDAMMADHLV).

The protein belongs to the WzzB/Cld/Rol family.

It localises to the cell inner membrane. Part of the ferric enterobactin transport system. The chain is Ferric enterobactin transport protein FepE (fepE) from Escherichia coli (strain K12).